The following is a 419-amino-acid chain: Protein distal antenna-related (419 aa).

In terms of domain architecture, HTH psq-type spans 15 to 66; that stretch reads TRGKRPLRNLTPNDKVRAIQRIHNGETKASVSRDIGVPESTLRGWCKNEQKL. The H-T-H motif DNA-binding region spans 42–62; sequence KASVSRDIGVPESTLRGWCKN. Disordered stretches follow at residues 333-359 and 378-419; these read QPGGGGPGGPSYNPNQMASGGSEPDLE and EASN…DAEQ.

In terms of assembly, interacts with itself, dan, ey and dac to form a complex (or complexes) containing the RD factors. In terms of tissue distribution, coexpressed with dan in the presumptive distal antenna, but not in the leg imaginal disk. Both proteins are also expressed in the brain and the eye region of the eye-antenna disk. First detected in early L3 eye disks in cells surrounding the newly initiated morphogenetic furrow. Highly expressed in evenly spaced clusters of cells anterior to the furrow, lower levels within and posterior to the furrow.

The protein resides in the nucleus. In terms of biological role, probable transcription factor with a role in the retinal determination (RD) network. Regulates ato expression and is required for normal R8 induction and differentiation. Danr appears to repress Dan expression, but Dan is required for Danr expression anterior to the morphogenetic furrow (MF). Dan and Danr lie downstream of so and require dac function for highest levels of expression. Contributes to differentiation of antenna-specific characteristics; effector gene that acts downstream of homothorax (hth), Distal-less (Dll), cut (ct) and spineless (ss) genes to control differentiation of distal antennal structures. The sequence is that of Protein distal antenna-related from Drosophila melanogaster (Fruit fly).